Consider the following 550-residue polypeptide: MKSLVLGLLVGSAIASGPLQHVLHAPPDPEPKPEPEPQVVKDPFEELRDTFDRLRNKAGDIWDDVMDNIPNIMSNMRPLTIPAKKFTRRPDSEWTHIVRGADLEALWVDDESGYKHRKIDGKLAQYDLRIKAVDPSDLGIDKVKQYSGYLDDNANDKHLFFWFFESRNDPFGDPVVLWLNGGPGCSSLTGMFFELGPASIDENITANYNPYSWNSNSSIIFLDQPVNVGYSYSSQAVSDTVTAAKDVYALLTLFFTQFRQYSAQDFHIAGESYAGHYIPVFASEILHHNNTNINLQSVLIGNGLTDPLSQYPFYRPMACGDGGYPSVLDSQSCQSMDNALPRCLSMIKSCYDIESTFTCLPASIYCNNALIGPYQKTGRNPYDVRTNCTGNDLCYPQLNYITEYLNKPHVMRSLGVEVDSYESCNMDINRNFLFHGDWMKPYHRLVPSLLARIPVLIYAGDADFICNWLGNKAWTEALEYPGHAKFAEAPMENLTMINSQGKNEVFGEVKSHSNLTFMRIFKAGHMTPFDSPQASLEFANSWLSGEWSEV.

Residues 1–18 (MKSLVLGLLVGSAIASGP) form the signal peptide. A propeptide spanning residues 19–131 (LQHVLHAPPD…KLAQYDLRIK (113 aa)) is cleaved from the precursor. Positions 20-39 (QHVLHAPPDPEPKPEPEPQV) are disordered. Cystine bridges form between Cys185/Cys424, Cys319/Cys333, Cys343/Cys366, Cys350/Cys359, and Cys388/Cys394. N-linked (GlcNAc...) asparagine glycans are attached at residues Asn203 and Asn216. The active site involves Ser272. Residue Asn289 is glycosylated (N-linked (GlcNAc...) asparagine). N-linked (GlcNAc...) asparagine glycosylation is present at Asn387. Residue Asp463 is part of the active site. N-linked (GlcNAc...) asparagine glycans are attached at residues Asn493 and Asn514. Residue His525 is part of the active site.

The protein belongs to the peptidase S10 family.

It localises to the vacuole. The enzyme catalyses Release of a C-terminal amino acid with broad specificity.. Its function is as follows. Vacuolar carboxypeptidase involved in degradation of small peptides. Digests preferentially peptides containing an aliphatic or hydrophobic residue in P1' position, as well as methionine, leucine or phenylalanine in P1 position of ester substrate. The protein is Carboxypeptidase Y homolog A (CPYA) of Paracoccidioides brasiliensis (strain Pb03).